We begin with the raw amino-acid sequence, 209 residues long: Orotate phosphoribosyltransferase (209 aa).

Residues Arg-96, Lys-100, His-102, and 122 to 130 contribute to the 5-phospho-alpha-D-ribose 1-diphosphate site; that span reads EDLISTGGS. Ser-126 provides a ligand contact to orotate.

Belongs to the purine/pyrimidine phosphoribosyltransferase family. PyrE subfamily. Homodimer. It depends on Mg(2+) as a cofactor.

It catalyses the reaction orotidine 5'-phosphate + diphosphate = orotate + 5-phospho-alpha-D-ribose 1-diphosphate. It participates in pyrimidine metabolism; UMP biosynthesis via de novo pathway; UMP from orotate: step 1/2. Catalyzes the transfer of a ribosyl phosphate group from 5-phosphoribose 1-diphosphate to orotate, leading to the formation of orotidine monophosphate (OMP). The polypeptide is Orotate phosphoribosyltransferase (Streptococcus pyogenes serotype M12 (strain MGAS2096)).